The following is a 118-amino-acid chain: UPF0344 protein BLi01172/BL01343 (118 aa).

The next 4 membrane-spanning stretches (helical) occupy residues 6–26, 33–53, 62–82, and 89–109; these read ITSWVIALILVFVAYGLYSSG, ITHMILRLFYIIVIITGAQLF, EYIAKALLGLITIGFMEMLLI, and AATGIWIGFIVVLLLTVVLGL.

The protein belongs to the UPF0344 family.

The protein resides in the cell membrane. In Bacillus licheniformis (strain ATCC 14580 / DSM 13 / JCM 2505 / CCUG 7422 / NBRC 12200 / NCIMB 9375 / NCTC 10341 / NRRL NRS-1264 / Gibson 46), this protein is UPF0344 protein BLi01172/BL01343.